A 454-amino-acid polypeptide reads, in one-letter code: 3-phosphoshikimate 1-carboxyvinyltransferase (454 aa).

3 residues coordinate 3-phosphoshikimate: lysine 39, serine 40, and arginine 44. Lysine 39 contacts phosphoenolpyruvate. Phosphoenolpyruvate-binding residues include glycine 112 and arginine 140. 3-phosphoshikimate contacts are provided by serine 185, glutamine 187, aspartate 333, and lysine 360. Position 187 (glutamine 187) interacts with phosphoenolpyruvate. The Proton acceptor role is filled by aspartate 333. Phosphoenolpyruvate-binding residues include arginine 364 and arginine 405.

The protein belongs to the EPSP synthase family. In terms of assembly, monomer.

It localises to the cytoplasm. It catalyses the reaction 3-phosphoshikimate + phosphoenolpyruvate = 5-O-(1-carboxyvinyl)-3-phosphoshikimate + phosphate. Its pathway is metabolic intermediate biosynthesis; chorismate biosynthesis; chorismate from D-erythrose 4-phosphate and phosphoenolpyruvate: step 6/7. Catalyzes the transfer of the enolpyruvyl moiety of phosphoenolpyruvate (PEP) to the 5-hydroxyl of shikimate-3-phosphate (S3P) to produce enolpyruvyl shikimate-3-phosphate and inorganic phosphate. This is 3-phosphoshikimate 1-carboxyvinyltransferase from Xylella fastidiosa (strain 9a5c).